The chain runs to 272 residues: Putative pyruvate, phosphate dikinase regulatory protein (272 aa).

An ADP-binding site is contributed by 147-154 (GLSRTSKT).

Belongs to the pyruvate, phosphate/water dikinase regulatory protein family. PDRP subfamily.

The enzyme catalyses N(tele)-phospho-L-histidyl/L-threonyl-[pyruvate, phosphate dikinase] + ADP = N(tele)-phospho-L-histidyl/O-phospho-L-threonyl-[pyruvate, phosphate dikinase] + AMP + H(+). It carries out the reaction N(tele)-phospho-L-histidyl/O-phospho-L-threonyl-[pyruvate, phosphate dikinase] + phosphate + H(+) = N(tele)-phospho-L-histidyl/L-threonyl-[pyruvate, phosphate dikinase] + diphosphate. Its function is as follows. Bifunctional serine/threonine kinase and phosphorylase involved in the regulation of the pyruvate, phosphate dikinase (PPDK) by catalyzing its phosphorylation/dephosphorylation. The protein is Putative pyruvate, phosphate dikinase regulatory protein of Clostridium botulinum (strain Alaska E43 / Type E3).